The chain runs to 115 residues: Large ribosomal subunit protein bL19 (115 aa).

It belongs to the bacterial ribosomal protein bL19 family.

Functionally, this protein is located at the 30S-50S ribosomal subunit interface and may play a role in the structure and function of the aminoacyl-tRNA binding site. This chain is Large ribosomal subunit protein bL19, found in Parabacteroides distasonis (strain ATCC 8503 / DSM 20701 / CIP 104284 / JCM 5825 / NCTC 11152).